The sequence spans 377 residues: 2-iminoacetate synthase (377 aa).

Residues 71–301 enclose the Radical SAM core domain; that stretch reads NTVSFYVPLY…PEIELSLSTR (231 aa). Residues Cys85, Cys89, and Cys92 each contribute to the [4Fe-4S] cluster site.

It belongs to the radical SAM superfamily. ThiH family. Forms a heterodimer with ThiG. Requires [4Fe-4S] cluster as cofactor.

It carries out the reaction L-tyrosine + S-adenosyl-L-methionine + NADPH = 2-iminoacetate + 4-methylphenol + 5'-deoxyadenosine + L-methionine + NADP(+). It participates in cofactor biosynthesis; thiamine diphosphate biosynthesis. In terms of biological role, catalyzes the radical-mediated cleavage of tyrosine to 2-iminoacetate and 4-cresol. This is 2-iminoacetate synthase (thiH) from Escherichia coli (strain K12).